Reading from the N-terminus, the 148-residue chain is Large ribosomal subunit protein bL27m (148 aa).

The transit peptide at 1-30 directs the protein to the mitochondrion; it reads MALAVLAWRTRTAVIALLSPPQAAALAVRY.

This sequence belongs to the bacterial ribosomal protein bL27 family. As to quaternary structure, component of the mitochondrial ribosome large subunit (39S) which comprises a 16S rRNA and about 50 distinct proteins.

Its subcellular location is the mitochondrion. The protein is Large ribosomal subunit protein bL27m (MRPL27) of Bos taurus (Bovine).